A 310-amino-acid chain; its full sequence is MILTLTLNPSVDISYPLDQFNLDTVNRVSQTSKTAGGKGLNVTRVLSEFGEDVIASGFLGGALGQYIEEQIETTRIKQAFFKIKGETRNCIAILHEGQQTEILEKGPTIELKESEEFKSHLLKLFKETDVAVMSGSLPKGLNTDYYADIVRLAKEQGILTILDSSGQSLEEVLISNVKPTVIKPNIDELSQLLNYKVTNDIKELKAAVSQPIFNDIEWIIVSLGSEGAFAKHNQKFYKVNIPNIKVVNPVGSGDSTVAGIASGLIHQQTDEELLKKANAFGMLNAMEQQTGHINTDKFDEIFKQIEVIEV.

It belongs to the carbohydrate kinase PfkB family. LacC subfamily.

The enzyme catalyses D-tagatofuranose 6-phosphate + ATP = D-tagatofuranose 1,6-bisphosphate + ADP + H(+). Its pathway is carbohydrate metabolism; D-tagatose 6-phosphate degradation; D-glyceraldehyde 3-phosphate and glycerone phosphate from D-tagatose 6-phosphate: step 1/2. This chain is Tagatose-6-phosphate kinase, found in Staphylococcus epidermidis (strain ATCC 35984 / DSM 28319 / BCRC 17069 / CCUG 31568 / BM 3577 / RP62A).